The following is a 105-amino-acid chain: Heat shock protein HspQ (105 aa).

This sequence belongs to the HspQ family.

The protein localises to the cytoplasm. Involved in the degradation of certain denaturated proteins, including DnaA, during heat shock stress. The chain is Heat shock protein HspQ from Blochmanniella floridana.